Consider the following 196-residue polypeptide: MTATIGHFLQNLCGEYSNQKQAFENPPLFAHIFLRYKPIEHLQPGSILLEQTYAVDPKHPYRLRVIRAEELTSGIIKLWNHTFKEPDRFSSATFDQDCREKIREEDLILLDHCHYQVRQLDDGFHGELEPGCRCIVRRDGKETYLVSSFHLQGDELSTLDRGHDPQTHDRCWGSIAGKFHFQRISHWAENIPETWL.

The protein belongs to the CpcT/CpeT biliprotein lyase family.

Covalently attaches a chromophore to Cys residue(s) of phycobiliproteins. This Synechococcus sp. (strain WH8020) protein is Chromophore lyase CpcT/CpeT.